Here is a 375-residue protein sequence, read N- to C-terminus: tRNA-specific 2-thiouridylase MnmA (375 aa).

ATP-binding positions include 8 to 15 (GLSGGVDS) and M34. The interaction with target base in tRNA stretch occupies residues 104-106 (NPD). C109 functions as the Nucleophile in the catalytic mechanism. C109 and C208 are disulfide-bonded. Residue G134 coordinates ATP. The interaction with tRNA stretch occupies residues 158-160 (KDQ). C208 (cysteine persulfide intermediate) is an active-site residue. Residues 321–322 (RY) are interaction with tRNA.

The protein belongs to the MnmA/TRMU family.

The protein localises to the cytoplasm. It carries out the reaction S-sulfanyl-L-cysteinyl-[protein] + uridine(34) in tRNA + AH2 + ATP = 2-thiouridine(34) in tRNA + L-cysteinyl-[protein] + A + AMP + diphosphate + H(+). Its function is as follows. Catalyzes the 2-thiolation of uridine at the wobble position (U34) of tRNA, leading to the formation of s(2)U34. The sequence is that of tRNA-specific 2-thiouridylase MnmA from Mycoplasma mycoides subsp. mycoides SC (strain CCUG 32753 / NCTC 10114 / PG1).